The sequence spans 215 residues: Ependymin-1 (215 aa).

Residues 1–20 (MHTVKLLCVVFSCLCAVAWA) form the signal peptide. N-linked (GlcNAc...) asparagine glycans are attached at residues asparagine 71 and asparagine 94.

It belongs to the ependymin family. Forms disulfide-linked dimers. Post-translationally, different glycosylation variants are known as EPD-beta and EPD-gamma. In terms of processing, binds calcium through the terminal sialic acids. As to expression, EPDs are synthesized in the meninx and secreted in the cerebrospinal fluid.

Its subcellular location is the secreted. May play a role in neural plasticity. May be involved during axon regeneration. The protein is Ependymin-1 (epd1) of Carassius auratus (Goldfish).